Reading from the N-terminus, the 226-residue chain is Ribonuclease 3 (226 aa).

The RNase III domain maps to Ile-6–Asp-128. Glu-41 provides a ligand contact to Mg(2+). The active site involves Asp-45. Mg(2+) is bound by residues Asp-114 and Glu-117. Glu-117 is a catalytic residue. Residues Asp-155–Leu-225 form the DRBM domain.

It belongs to the ribonuclease III family. As to quaternary structure, homodimer. Mg(2+) serves as cofactor.

Its subcellular location is the cytoplasm. It catalyses the reaction Endonucleolytic cleavage to 5'-phosphomonoester.. Functionally, digests double-stranded RNA. Involved in the processing of primary rRNA transcript to yield the immediate precursors to the large and small rRNAs (23S and 16S). Processes some mRNAs, and tRNAs when they are encoded in the rRNA operon. Processes pre-crRNA and tracrRNA of type II CRISPR loci if present in the organism. The sequence is that of Ribonuclease 3 from Photorhabdus laumondii subsp. laumondii (strain DSM 15139 / CIP 105565 / TT01) (Photorhabdus luminescens subsp. laumondii).